We begin with the raw amino-acid sequence, 233 residues long: Ribosomal RNA-processing protein 14-C (233 aa).

Residues 32–65 (DRALLLQRRKEKAKARAEAKKLAKKESKAKQESK) are a coiled coil. Residues 47–64 (RAEAKKLAKKESKAKQES) are compositionally biased toward basic and acidic residues. Disordered stretches follow at residues 47–87 (RAEA…DNHK), 130–149 (KRRIESMDEEKRRKIEESDK), and 164–233 (DNEQ…SKKK). A Phosphoserine modification is found at serine 75. The stretch at 122–223 (ALKHLEAKKR…ESKKSKKGKA (102 aa)) forms a coiled coil. Composition is skewed to basic and acidic residues over residues 133-149 (IESMDEEKRRKIEESDK) and 180-209 (KKKSSDAWKERKDNEKKAMLMRQQRREENL). Basic residues predominate over residues 210-233 (KKRRESKKSKKGKAPKKKKPSKKK).

This sequence belongs to the SURF6 family. As to quaternary structure, component of the 90S and 60S pre-ribosomal particles.

It is found in the nucleus. It localises to the nucleolus. Functionally, involved in ribosome biogenesis and cell polarity. Required for the synthesis of both 40S and 60S ribosomal subunits and may also play some direct role in correct positioning of the mitotic spindle during mitosis. The chain is Ribosomal RNA-processing protein 14-C (rrp14c) from Schizosaccharomyces pombe (strain 972 / ATCC 24843) (Fission yeast).